Here is a 124-residue protein sequence, read N- to C-terminus: UPF0231 protein SO_3983 (124 aa).

Belongs to the UPF0231 family.

The protein is UPF0231 protein SO_3983 of Shewanella oneidensis (strain ATCC 700550 / JCM 31522 / CIP 106686 / LMG 19005 / NCIMB 14063 / MR-1).